The primary structure comprises 237 residues: MQRKIKSYVLRAGRISNRQQQGLDLWLEDYELKFDSPTPWNFAKEFGRHDADTIVEIGFGMGTSLFAMAMNNPQCNYLGIEVHKAGVGSLVADLHEHQISNVRVVVHDAVEVLQTKIPENSLAGVQIFFPDPWHKKRHHKRRLIQSEFIQMLVKKIRPSGFIHCATDWEDYAEHILNVLSSESALFNQQKEGGYSPRPDSRPLTKFEQRGERLGHGVWDLVFIKNKEVTNDKACNSY.

Glu56, Glu81, Asp108, and Asp131 together coordinate S-adenosyl-L-methionine. Residue Asp131 is part of the active site. Substrate-binding positions include Lys135, Asp167, and 204-207 (TKFE).

This sequence belongs to the class I-like SAM-binding methyltransferase superfamily. TrmB family.

It carries out the reaction guanosine(46) in tRNA + S-adenosyl-L-methionine = N(7)-methylguanosine(46) in tRNA + S-adenosyl-L-homocysteine. Its pathway is tRNA modification; N(7)-methylguanine-tRNA biosynthesis. Its function is as follows. Catalyzes the formation of N(7)-methylguanine at position 46 (m7G46) in tRNA. This chain is tRNA (guanine-N(7)-)-methyltransferase, found in Legionella pneumophila (strain Paris).